A 319-amino-acid chain; its full sequence is Olfactory receptor 56B4 (319 aa).

Over 1-31 (MDTSTSVTYDSSLQISQFILMGLPGIHEWQH) the chain is Extracellular. A helical membrane pass occupies residues 32-52 (WLSLPLTLLYLLALGANLLII). Topologically, residues 53–60 (ITIQHETV) are cytoplasmic. Residues 61 to 81 (LHEPMYHLLGILAVVDIGLAT) traverse the membrane as a helical segment. The Extracellular segment spans residues 82-105 (TIMPKILAIFWFDAKAISLPMCFA). Cys103 and Cys195 form a disulfide bridge. The chain crosses the membrane as a helical span at residues 106–126 (QIYAIHCFFCIESGIFLCMAV). Topologically, residues 127–145 (DRYIAICRPLQYPSIVTKA) are cytoplasmic. A helical transmembrane segment spans residues 146 to 166 (FVFKATGFIMLRNGLLTIPVP). The Extracellular portion of the chain corresponds to 167–202 (ILAAQRHYCSRNEIEHCLCSNLGVISLACDDITVNK). Residues 203-223 (FYQLMLAWVLVGSDMALVFSS) form a helical membrane-spanning segment. Topologically, residues 224–243 (YAVILHSVLRLNSAEAMSKA) are cytoplasmic. The chain crosses the membrane as a helical span at residues 244–263 (LSTCSSHLILILFHTGIIVL). At 264–277 (SVTHLAEKKIPLIP) the chain is on the extracellular side. The helical transmembrane segment at 278–298 (VFLNVLHNVIPPALNPLACAL) threads the bilayer. Residues 299–319 (RMHKLRLGFQRLLGLGQDVSK) are Cytoplasmic-facing.

It belongs to the G-protein coupled receptor 1 family.

It is found in the cell membrane. Its function is as follows. Odorant receptor. This chain is Olfactory receptor 56B4 (OR56B4), found in Homo sapiens (Human).